The chain runs to 220 residues: Ribonuclease HII (220 aa).

The RNase H type-2 domain maps to 16 to 216 (PVFAGIDEAG…VRPNPAAEEQ (201 aa)). A divalent metal cation is bound by residues Asp22, Glu23, and Asp114.

Belongs to the RNase HII family. Mn(2+) serves as cofactor. The cofactor is Mg(2+).

Its subcellular location is the cytoplasm. The enzyme catalyses Endonucleolytic cleavage to 5'-phosphomonoester.. Endonuclease that specifically degrades the RNA of RNA-DNA hybrids. The chain is Ribonuclease HII from Nitratidesulfovibrio vulgaris (strain ATCC 29579 / DSM 644 / CCUG 34227 / NCIMB 8303 / VKM B-1760 / Hildenborough) (Desulfovibrio vulgaris).